We begin with the raw amino-acid sequence, 87 residues long: MSETKNVRTLQGKVVSDKMDKTVTVLVERKVKHPLYGKIIRLSTKIHAHDENNQYGIGDVVVISESRPLSKTKSWVVSELVEKARSI.

Belongs to the universal ribosomal protein uS17 family. As to quaternary structure, part of the 30S ribosomal subunit.

One of the primary rRNA binding proteins, it binds specifically to the 5'-end of 16S ribosomal RNA. In Neisseria meningitidis serogroup C (strain 053442), this protein is Small ribosomal subunit protein uS17.